The sequence spans 118 residues: Ferredoxin-thioredoxin reductase, catalytic chain (118 aa).

Cys56 provides a ligand contact to [4Fe-4S] cluster. The Nucleophile role is filled by Cys58. Cys58 and Cys88 are disulfide-bonded. Positions 75, 77, and 86 each coordinate [4Fe-4S] cluster.

Belongs to the ferredoxin thioredoxin reductase beta subunit family. Heterodimer of subunit A (variable subunit) and subunit B (catalytic subunit). Heterodimeric FTR forms a complex with ferredoxin and thioredoxin. [4Fe-4S] cluster serves as cofactor.

The enzyme catalyses [thioredoxin]-disulfide + 2 reduced [2Fe-2S]-[ferredoxin] + 2 H(+) = [thioredoxin]-dithiol + 2 oxidized [2Fe-2S]-[ferredoxin]. Its function is as follows. Catalytic subunit of the ferredoxin-thioredoxin reductase (FTR), which catalyzes the two-electron reduction of thioredoxins by the electrons provided by reduced ferredoxin. This is Ferredoxin-thioredoxin reductase, catalytic chain from Synechocystis sp. (strain ATCC 27184 / PCC 6803 / Kazusa).